Here is a 104-residue protein sequence, read N- to C-terminus: UPF0213 protein VIBHAR_05350 (104 aa).

The region spanning 7-82 (QRWSVYLIRN…KQLTKTKKEL (76 aa)) is the GIY-YIG domain.

It belongs to the UPF0213 family.

This chain is UPF0213 protein VIBHAR_05350, found in Vibrio campbellii (strain ATCC BAA-1116).